The primary structure comprises 343 residues: Heat-inducible transcription repressor HrcA (343 aa).

This sequence belongs to the HrcA family.

Its function is as follows. Negative regulator of class I heat shock genes (grpE-dnaK-dnaJ and groELS operons). Prevents heat-shock induction of these operons. The chain is Heat-inducible transcription repressor HrcA from Bacillus cytotoxicus (strain DSM 22905 / CIP 110041 / 391-98 / NVH 391-98).